The sequence spans 358 residues: 3-isopropylmalate dehydrogenase (358 aa).

Substrate is bound by residues Arg92, Arg102, Arg130, and Asp224. Positions 224, 248, and 252 each coordinate Mg(2+). Residue Gly282–Asn294 participates in NAD(+) binding.

It belongs to the isocitrate and isopropylmalate dehydrogenases family. LeuB type 1 subfamily. As to quaternary structure, homodimer. The cofactor is Mg(2+). It depends on Mn(2+) as a cofactor.

The protein localises to the cytoplasm. The catalysed reaction is (2R,3S)-3-isopropylmalate + NAD(+) = 4-methyl-2-oxopentanoate + CO2 + NADH. It participates in amino-acid biosynthesis; L-leucine biosynthesis; L-leucine from 3-methyl-2-oxobutanoate: step 3/4. Catalyzes the oxidation of 3-carboxy-2-hydroxy-4-methylpentanoate (3-isopropylmalate) to 3-carboxy-4-methyl-2-oxopentanoate. The product decarboxylates to 4-methyl-2 oxopentanoate. The polypeptide is 3-isopropylmalate dehydrogenase (Bordetella parapertussis (strain 12822 / ATCC BAA-587 / NCTC 13253)).